Reading from the N-terminus, the 141-residue chain is Hemoglobin subunit alpha (141 aa).

Residues 1–141 enclose the Globin domain; the sequence is VLSSTDKSNV…VSTVLTSKYR (141 aa). The residue at position 3 (Ser-3) is a Phosphoserine. Lys-7 and Lys-11 each carry N6-succinyllysine. Position 16 is an N6-acetyllysine; alternate (Lys-16). Lys-16 bears the N6-succinyllysine; alternate mark. Phosphotyrosine is present on Tyr-24. At Ser-35 the chain carries Phosphoserine. Position 40 is an N6-succinyllysine (Lys-40). Residue His-58 coordinates O2. His-87 provides a ligand contact to heme b. Phosphoserine is present on Ser-102. Phosphothreonine is present on Thr-108. A phosphoserine mark is found at Ser-124 and Ser-131. Thr-134 and Thr-137 each carry phosphothreonine. At Ser-138 the chain carries Phosphoserine.

The protein belongs to the globin family. As to quaternary structure, heterotetramer of two alpha chains and two beta chains. As to expression, red blood cells.

Its function is as follows. Involved in oxygen transport from the lung to the various peripheral tissues. Hemopressin acts as an antagonist peptide of the cannabinoid receptor CNR1. Hemopressin-binding efficiently blocks cannabinoid receptor CNR1 and subsequent signaling. The chain is Hemoglobin subunit alpha (HBA) from Pteropus poliocephalus (Grey-headed flying fox).